A 670-amino-acid polypeptide reads, in one-letter code: Mannosyl-oligosaccharide alpha-1,2-mannosidase IA (670 aa).

Over 1 to 30 (MTGILPTYQRFVNGVPVPSISRRSFRLREK) the chain is Cytoplasmic. A helical; Signal-anchor for type II membrane protein transmembrane segment spans residues 31–51 (YLIVSVLLTFGIVWLGALFYL). Residues 52-670 (PEFKSSNSVN…EPAHAQNNRI (619 aa)) lie on the Lumenal side of the membrane. N61 is a glycosylation site (N-linked (GlcNAc...) asparagine). Positions 135 to 177 (DVAPSVSSSRGPSKPPVDAIEEPAVGNNAANKDVSPSGPKAES) are disordered. C480 and C512 are disulfide-bonded. E526 (proton donor) is an active-site residue. A Ca(2+)-binding site is contributed by T637.

Belongs to the glycosyl hydrolase 47 family. Ca(2+) is required as a cofactor. N-glycosylated. Contains high mannose-type oligosaccharides.

The protein localises to the golgi apparatus membrane. The catalysed reaction is N(4)-(alpha-D-Man-(1-&gt;2)-alpha-D-Man-(1-&gt;2)-alpha-D-Man-(1-&gt;3)-[alpha-D-Man-(1-&gt;2)-alpha-D-Man-(1-&gt;3)-[alpha-D-Man-(1-&gt;2)-alpha-D-Man-(1-&gt;6)]-alpha-D-Man-(1-&gt;6)]-beta-D-Man-(1-&gt;4)-beta-D-GlcNAc-(1-&gt;4)-beta-D-GlcNAc)-L-asparaginyl-[protein] (N-glucan mannose isomer 9A1,2,3B1,2,3) + 4 H2O = N(4)-(alpha-D-Man-(1-&gt;3)-[alpha-D-Man-(1-&gt;3)-[alpha-D-Man-(1-&gt;6)]-alpha-D-Man-(1-&gt;6)]-beta-D-Man-(1-&gt;4)-beta-D-GlcNAc-(1-&gt;4)-beta-D-GlcNAc)-L-asparaginyl-[protein] (N-glucan mannose isomer 5A1,2) + 4 beta-D-mannose. It catalyses the reaction N(4)-(alpha-D-Man-(1-&gt;2)-alpha-D-Man-(1-&gt;2)-alpha-D-Man-(1-&gt;3)-[alpha-D-Man-(1-&gt;3)-[alpha-D-Man-(1-&gt;2)-alpha-D-Man-(1-&gt;6)]-alpha-D-Man-(1-&gt;6)]-beta-D-Man-(1-&gt;4)-beta-D-GlcNAc-(1-&gt;4)-beta-D-GlcNAc)-L-asparaginyl-[protein] (N-glucan mannose isomer 8A1,2,3B1,3) + 3 H2O = N(4)-(alpha-D-Man-(1-&gt;3)-[alpha-D-Man-(1-&gt;3)-[alpha-D-Man-(1-&gt;6)]-alpha-D-Man-(1-&gt;6)]-beta-D-Man-(1-&gt;4)-beta-D-GlcNAc-(1-&gt;4)-beta-D-GlcNAc)-L-asparaginyl-[protein] (N-glucan mannose isomer 5A1,2) + 3 beta-D-mannose. Its pathway is protein modification; protein glycosylation. Strongly inhibited by 1-deoxymannojirimycin, an inhibitor of class I alpha-mannosidases, and by EDTA. EDTA inhibition is reversed by the addition of calcium, but not of magnesium. Functionally, involved in the maturation of Asn-linked oligosaccharides. Converts Man(9)GlcNAc(2) to Man(5)GlcNAc(2) primarily through the Man(7)GlcNAc(2) isomer C processing intermediate. This chain is Mannosyl-oligosaccharide alpha-1,2-mannosidase IA, found in Spodoptera frugiperda (Fall armyworm).